Here is an 84-residue protein sequence, read N- to C-terminus: Large ribosomal subunit protein bL31 (84 aa).

Disordered regions lie at residues 1-41 (MQHD…DSTN) and 63-84 (RRYG…AADE). Polar residues predominate over residues 21–30 (EITTRSTMET). Positions 68–84 (TDDDEGDDEETEDAADE) are enriched in acidic residues.

The protein belongs to the bacterial ribosomal protein bL31 family. Type A subfamily. As to quaternary structure, part of the 50S ribosomal subunit.

Its function is as follows. Binds the 23S rRNA. The chain is Large ribosomal subunit protein bL31 from Salinibacter ruber (strain DSM 13855 / M31).